Consider the following 467-residue polypeptide: 2-succinylbenzoate--CoA ligase (467 aa).

This sequence belongs to the ATP-dependent AMP-binding enzyme family. MenE subfamily.

The catalysed reaction is 2-succinylbenzoate + ATP + CoA = 2-succinylbenzoyl-CoA + AMP + diphosphate. Its pathway is quinol/quinone metabolism; 1,4-dihydroxy-2-naphthoate biosynthesis; 1,4-dihydroxy-2-naphthoate from chorismate: step 5/7. It functions in the pathway quinol/quinone metabolism; menaquinone biosynthesis. In terms of biological role, converts 2-succinylbenzoate (OSB) to 2-succinylbenzoyl-CoA (OSB-CoA). This Listeria innocua serovar 6a (strain ATCC BAA-680 / CLIP 11262) protein is 2-succinylbenzoate--CoA ligase.